Consider the following 339-residue polypeptide: NADH-quinone oxidoreductase subunit H (339 aa).

The next 9 helical transmembrane spans lie at 9–29 (IFPLIIIALKVVAITIPLILC), 50–70 (PNVVGPFGLLQPIADAVKLLF), 82–102 (ILFVLAPMITFILSLIGWAVI), 115–135 (VGVLYILAISSLSVYGIIIAG), 161–181 (MGLVIITVLLTTGTLNLSQIV), 187–207 (MPWWIDLMLMPMGVVFFISVL), 235–255 (MGFALFFLGEYANMILVSAMT), 275–295 (IPGFFWFVFKVGFLLFCFLWI), and 311–331 (GWKVFLPLTLFWVVLVSSVLI).

This sequence belongs to the complex I subunit 1 family. NDH-1 is composed of 14 different subunits. Subunits NuoA, H, J, K, L, M, N constitute the membrane sector of the complex.

Its subcellular location is the cell inner membrane. The catalysed reaction is a quinone + NADH + 5 H(+)(in) = a quinol + NAD(+) + 4 H(+)(out). Functionally, NDH-1 shuttles electrons from NADH, via FMN and iron-sulfur (Fe-S) centers, to quinones in the respiratory chain. The immediate electron acceptor for the enzyme in this species is believed to be ubiquinone. Couples the redox reaction to proton translocation (for every two electrons transferred, four hydrogen ions are translocated across the cytoplasmic membrane), and thus conserves the redox energy in a proton gradient. This subunit may bind ubiquinone. The polypeptide is NADH-quinone oxidoreductase subunit H (Rickettsia bellii (strain RML369-C)).